A 240-amino-acid chain; its full sequence is MTDNQRQSTTDGQPETRDPAQATAEAAEQTQATQASAAVEGELQDGSADSATGASLSADDGADPEALRQRVEELEKALADAEQKAEEHWDQVLRMRAELENARRRAEKDVDQAKRQGLEKVCGDLLQVKDSLEMGVQAAEDAEADREKLLEGSQLTLKMLNQVFERFEIEEINPQGERFNPDYHEAMAAQPSDEQEPNTVLQVVQKGYRLQDRLLRPALVVVAKKGDGGAGSGGSVDETA.

The segment covering 1–13 has biased composition (polar residues); that stretch reads MTDNQRQSTTDGQ. The segment at 1–89 is disordered; the sequence is MTDNQRQSTT…DAEQKAEEHW (89 aa). Residues 20–38 show a composition bias toward low complexity; that stretch reads AQATAEAAEQTQATQASAA. Residues 65 to 89 are compositionally biased toward basic and acidic residues; sequence EALRQRVEELEKALADAEQKAEEHW.

The protein belongs to the GrpE family. As to quaternary structure, homodimer.

Its subcellular location is the cytoplasm. In terms of biological role, participates actively in the response to hyperosmotic and heat shock by preventing the aggregation of stress-denatured proteins, in association with DnaK and GrpE. It is the nucleotide exchange factor for DnaK and may function as a thermosensor. Unfolded proteins bind initially to DnaJ; upon interaction with the DnaJ-bound protein, DnaK hydrolyzes its bound ATP, resulting in the formation of a stable complex. GrpE releases ADP from DnaK; ATP binding to DnaK triggers the release of the substrate protein, thus completing the reaction cycle. Several rounds of ATP-dependent interactions between DnaJ, DnaK and GrpE are required for fully efficient folding. The protein is Protein GrpE of Halorhodospira halophila (strain DSM 244 / SL1) (Ectothiorhodospira halophila (strain DSM 244 / SL1)).